A 367-amino-acid chain; its full sequence is Phospho-N-acetylmuramoyl-pentapeptide-transferase (367 aa).

Helical transmembrane passes span 30 to 50, 71 to 91, 94 to 114, 138 to 158, 169 to 189, 200 to 220, 237 to 257, 264 to 284, 289 to 309, and 344 to 364; these read AAAITALLITLVAGPGFIALL, LPTMGGLLIIISVEVSVLLWA, TDPHVWLIMLALLWMGVIGFI, ISLGLVVGIYTSMDPVFSVLM, LTIDYGIFYVPVVIFIITALS, GLAAGSSAIVIFGLGGFAYLA, GGEIAVVCMAATMACVGFLWF, IIMGDTGSLALGSTIAVTALL, LLLPVLGGLFFLETLSVSLQV, and KIVIRFWIVTILLFLTSLMTL.

It belongs to the glycosyltransferase 4 family. MraY subfamily. It depends on Mg(2+) as a cofactor.

The protein resides in the cell inner membrane. It carries out the reaction UDP-N-acetyl-alpha-D-muramoyl-L-alanyl-gamma-D-glutamyl-meso-2,6-diaminopimeloyl-D-alanyl-D-alanine + di-trans,octa-cis-undecaprenyl phosphate = di-trans,octa-cis-undecaprenyl diphospho-N-acetyl-alpha-D-muramoyl-L-alanyl-D-glutamyl-meso-2,6-diaminopimeloyl-D-alanyl-D-alanine + UMP. It functions in the pathway cell wall biogenesis; peptidoglycan biosynthesis. In terms of biological role, catalyzes the initial step of the lipid cycle reactions in the biosynthesis of the cell wall peptidoglycan: transfers peptidoglycan precursor phospho-MurNAc-pentapeptide from UDP-MurNAc-pentapeptide onto the lipid carrier undecaprenyl phosphate, yielding undecaprenyl-pyrophosphoryl-MurNAc-pentapeptide, known as lipid I. The chain is Phospho-N-acetylmuramoyl-pentapeptide-transferase from Chlorobium phaeovibrioides (strain DSM 265 / 1930) (Prosthecochloris vibrioformis (strain DSM 265)).